The sequence spans 276 residues: Hydroxyethylthiazole kinase (276 aa).

Residues Met53 and Ala202 each coordinate substrate.

The protein belongs to the Thz kinase family. It depends on Mg(2+) as a cofactor.

The enzyme catalyses 5-(2-hydroxyethyl)-4-methylthiazole + ATP = 4-methyl-5-(2-phosphooxyethyl)-thiazole + ADP + H(+). Its pathway is cofactor biosynthesis; thiamine diphosphate biosynthesis; 4-methyl-5-(2-phosphoethyl)-thiazole from 5-(2-hydroxyethyl)-4-methylthiazole: step 1/1. Thiazole kinase involved in thiamine salvage pathway. This is Hydroxyethylthiazole kinase (THIM) from Arabidopsis thaliana (Mouse-ear cress).